The sequence spans 176 residues: NAD(P)H-quinone oxidoreductase subunit 6, chloroplastic (176 aa).

5 consecutive transmembrane segments (helical) span residues 10-30 (ILLV…VLFT), 32-52 (PIYS…FYIP), 61-81 (AQLL…VMFM), 90-112 (FHLW…FSLI), and 152-172 (FYLP…GAIA).

This sequence belongs to the complex I subunit 6 family. NDH is composed of at least 16 different subunits, 5 of which are encoded in the nucleus.

Its subcellular location is the plastid. It is found in the chloroplast thylakoid membrane. The catalysed reaction is a plastoquinone + NADH + (n+1) H(+)(in) = a plastoquinol + NAD(+) + n H(+)(out). It carries out the reaction a plastoquinone + NADPH + (n+1) H(+)(in) = a plastoquinol + NADP(+) + n H(+)(out). NDH shuttles electrons from NAD(P)H:plastoquinone, via FMN and iron-sulfur (Fe-S) centers, to quinones in the photosynthetic chain and possibly in a chloroplast respiratory chain. The immediate electron acceptor for the enzyme in this species is believed to be plastoquinone. Couples the redox reaction to proton translocation, and thus conserves the redox energy in a proton gradient. The chain is NAD(P)H-quinone oxidoreductase subunit 6, chloroplastic (ndhG) from Ceratophyllum demersum (Rigid hornwort).